A 362-amino-acid polypeptide reads, in one-letter code: PDZ and LIM domain protein 3 (362 aa).

The PDZ domain occupies 1–84 (MPQNVVLPGP…QLCLKIDRAE (84 aa)). Residues serine 18, serine 92, and serine 263 each carry the phosphoserine modification. Residues 261–282 (DGSDDRPAGTRSVRPVTKVHGG) are disordered. The region spanning 290–349 (PLCDKCGSGIVGAVVKARDKYRHPECFVCADCNLNLKQKGYFFVEGELYCEMHARARTRP) is the LIM zinc-binding domain.

Interacts with ACTN2. Forms a heterodimer with PDLIM4 (via LIM domain). In terms of tissue distribution, highly expressed in skeletal muscle and at low levels in the heart.

The protein localises to the cytoplasm. It localises to the myofibril. Its subcellular location is the sarcomere. The protein resides in the z line. In terms of biological role, may play a role in the organization of actin filament arrays within muscle cells. The polypeptide is PDZ and LIM domain protein 3 (Pdlim3) (Rattus norvegicus (Rat)).